The sequence spans 314 residues: Acetyl-coenzyme A carboxylase carboxyl transferase subunit alpha (314 aa).

The 255-residue stretch at 38 to 292 (RLERKSAALL…ANAIDEELDA (255 aa)) folds into the CoA carboxyltransferase C-terminal domain.

This sequence belongs to the AccA family. In terms of assembly, acetyl-CoA carboxylase is a heterohexamer composed of biotin carboxyl carrier protein (AccB), biotin carboxylase (AccC) and two subunits each of ACCase subunit alpha (AccA) and ACCase subunit beta (AccD).

It localises to the cytoplasm. The enzyme catalyses N(6)-carboxybiotinyl-L-lysyl-[protein] + acetyl-CoA = N(6)-biotinyl-L-lysyl-[protein] + malonyl-CoA. Its pathway is lipid metabolism; malonyl-CoA biosynthesis; malonyl-CoA from acetyl-CoA: step 1/1. Functionally, component of the acetyl coenzyme A carboxylase (ACC) complex. First, biotin carboxylase catalyzes the carboxylation of biotin on its carrier protein (BCCP) and then the CO(2) group is transferred by the carboxyltransferase to acetyl-CoA to form malonyl-CoA. This chain is Acetyl-coenzyme A carboxylase carboxyl transferase subunit alpha, found in Erythrobacter litoralis (strain HTCC2594).